We begin with the raw amino-acid sequence, 312 residues long: Protoheme IX farnesyltransferase (312 aa).

9 helical membrane passes run 29–49, 50–70, 90–110, 117–137, 150–170, 177–197, 223–243, 246–266, and 292–312; these read VMSLVVFTGLVGLVLAPGHMN, PVLAVISILCIAVGAGASGAL, IPAGIIAPNQVLAFGLTLSAF, LMVNWLAAALLAFTIFFYAVI, IVIGGAAGAFPPMIGWAAATG, LVLFMIIFLWTPPHFWALSLF, ALFYAVLMAPVGVLPWVMGFA, FYGVVSTLLGLAFVYYAWRLW, and IFAVLLFEALTFKLLAAFGVF.

It belongs to the UbiA prenyltransferase family. Protoheme IX farnesyltransferase subfamily.

Its subcellular location is the cell inner membrane. It catalyses the reaction heme b + (2E,6E)-farnesyl diphosphate + H2O = Fe(II)-heme o + diphosphate. It functions in the pathway porphyrin-containing compound metabolism; heme O biosynthesis; heme O from protoheme: step 1/1. Converts heme B (protoheme IX) to heme O by substitution of the vinyl group on carbon 2 of heme B porphyrin ring with a hydroxyethyl farnesyl side group. The polypeptide is Protoheme IX farnesyltransferase (Brucella melitensis biotype 1 (strain ATCC 23456 / CCUG 17765 / NCTC 10094 / 16M)).